The chain runs to 170 residues: APRG1 tumor suppressor candidate (170 aa).

Residues 150-170 (IALALAGPGAILILELSWFLG) form a helical membrane-spanning segment.

Expressed at high levels in the pancreas and placenta. In terms of tissue distribution, expressed at high levels in the kidney.

It is found in the membrane. The protein is APRG1 tumor suppressor candidate of Homo sapiens (Human).